Here is a 665-residue protein sequence, read N- to C-terminus: MGQIVGIDLGTTNSVVGVIEAGRPVVIANSEGTRTTPSIVGFTKNSEIVIGDQARRQLVLNPKNTFYNLKRFIGRDWDELDETSISVPYNVKSNDKGSVRILSPFTEREYAPEELISSIIRKLINDAETYLGDTIDSAVITVPAYFNESQRQATKDSAVLAGIKVDRILNEPTAAALAYGFEKSSSNNVLVFDLGGGTFDVSLLRISNGVFDVKATCGDTQLGGNNFDSKIVDWIAERFLEKHKIDLRRDRQALQRLTEAAEKAKCELSGLQKTKISLPFITTSDDGPLHIEEEFDRKLFESLSDDLLDRLLEPVQIALEDSGWDAEQIDEVVLVGGSTRIPMVQQLVKTLVPNEPCQSVNPDEVVAIGAAIQSGIISGDLRDLLLNDVTPLSLGLETIGGLMKVLIPRNTPIPVRQSDVFSTSESNQSSVVVQVRQGERPLASENKSLGKFRLSGIPPAPRGIPQVQVAFDIDANGLLEVSATDRTTGRKQTVSISGGSNLNEQEINMMIAEAKSKSTEDRIKRSVIDRKNNALTLIAQAERRLRDASLEFGPYGAERQQRAVELAIQDVEEFIDDDDPQELEISVSSLQEALFGLNRRFAAEKKVDSNPLQGIKNTFGSLKDELFSDDYWDDDPWDNQMNSNSRNSRYGNSRDDDPWDNDYFL.

Position 198 is a phosphothreonine; by autocatalysis (T198). The segment at 634 to 665 (DDPWDNQMNSNSRNSRYGNSRDDDPWDNDYFL) is disordered. Low complexity predominate over residues 642–651 (NSNSRNSRYG).

The protein belongs to the heat shock protein 70 family.

Acts as a chaperone. The sequence is that of Chaperone protein dnaK1 (dnaK1) from Prochlorococcus marinus subsp. pastoris (strain CCMP1986 / NIES-2087 / MED4).